The chain runs to 175 residues: ATP-dependent protease subunit HslV (175 aa).

Thr2 is an active-site residue. Gly158, Cys161, and Thr164 together coordinate Na(+).

It belongs to the peptidase T1B family. HslV subfamily. A double ring-shaped homohexamer of HslV is capped on each side by a ring-shaped HslU homohexamer. The assembly of the HslU/HslV complex is dependent on binding of ATP.

The protein localises to the cytoplasm. The enzyme catalyses ATP-dependent cleavage of peptide bonds with broad specificity.. With respect to regulation, allosterically activated by HslU binding. Functionally, protease subunit of a proteasome-like degradation complex believed to be a general protein degrading machinery. In Histophilus somni (strain 129Pt) (Haemophilus somnus), this protein is ATP-dependent protease subunit HslV.